We begin with the raw amino-acid sequence, 340 residues long: L-threonine 3-dehydrogenase (340 aa).

Cysteine 38 contacts Zn(2+). Active-site charge relay system residues include threonine 40 and histidine 43. Histidine 63, glutamate 64, cysteine 93, cysteine 96, cysteine 99, and cysteine 107 together coordinate Zn(2+). NAD(+) contacts are provided by residues isoleucine 175, aspartate 195, arginine 200, 262 to 264, and 286 to 287; these read LGI and IY.

This sequence belongs to the zinc-containing alcohol dehydrogenase family. In terms of assembly, homotetramer. Requires Zn(2+) as cofactor.

The protein localises to the cytoplasm. It catalyses the reaction L-threonine + NAD(+) = (2S)-2-amino-3-oxobutanoate + NADH + H(+). The protein operates within amino-acid degradation; L-threonine degradation via oxydo-reductase pathway; glycine from L-threonine: step 1/2. Functionally, catalyzes the NAD(+)-dependent oxidation of L-threonine to 2-amino-3-ketobutyrate. In Pseudoalteromonas atlantica (strain T6c / ATCC BAA-1087), this protein is L-threonine 3-dehydrogenase.